Consider the following 1015-residue polypeptide: MSTVKKSSKKKSSKKSSSGNESSKKSSPKIVPKHTAKNLPKPIKNFEIDLDKCANCPGCLTYLSFIRQVENIIQQNSSRSTTTQLIVKLISNFVWKYRFTYEQIAVNLFKYKFKERGYLVKILVSLGFDPNNLKINGHKVLKILVYENDIPSIIALVENGANIDFGKAPSNILHICASRNYPVLLKYALSRNEIDINAVNIDGRSPLYLACLYLNKECIKILLDNGADVEVCTPDEKTCCLELIIFLGNIMHNNLEVYTEIYQRYGDKYSDNISELVGNIVDALKYIISAKNNMSRQEIYTIRNLCFNKPIVMNEKIVFDLFVFIMDKFPKIVYNKFTHLGHNAINTSIMFCNNSLIKYFVDKTDLDFQAINNNITNPIQMLVNHGYIDYVETILNRNPKIVSTKCRYNNNLLHYTLMPCYVYSNVPRIKSDKDIIELVKIFANNKKINQNHRNNSGYRPIEVAIRYCSIDVIKELLKYNTTIFAENRIKQQLFPVLNNNDIISFATQLGRFDVVTYLIQENVQFQLYQIDDIHTVPTALLIAIVYHRKNFIQFFLELPQITDCLNNDVTKEYVINFANMYSNYNVQITDTYNLNFIGNDKMSFTHRIDRMIHFYSVHYGYSKMVILSGLSTILSLLEKICLASKKCKNYRNLPNSKFLEATIFSNGPCDLTFRNEFSNLYTDINLLNYMNDSKFFDNIVEIIGDLIEYPILLDIFEYMFAVRDLPISSQPIIKFIESLGLINQSNKIIKINKIVNELLNKSEISIDLNDQDTHNYDDYVENDPEFDSDEFDTDEFSDEAIKDFFGLDNKNLLTDKTSSPIKPIKNNQKENFNKKIDKYRVENMLHKFCRGEKLPHYDIIYKCLMQTDYYQILDNKIVVHNNEIILAVIYKLKSSDSTNSQMSHKPSVKTNPSDWIKSYSTNICSPNKQDHYHMFPFVLDWILYKWSCVEFQTKDKIYPTEFNTHLYFYGELNTNGRMVKGCFEYFLNCHKSLYHRLFHEIDRVPPQIQRKIYNH.

A compositionally biased stretch (basic residues) spans Met1 to Lys14. Residues Met1–Lys37 are disordered. 8 ANK repeats span residues Asn136–Phe165, Ala168–Ile201, Asp202–Val231, Leu340–Ala370, Asn374–Ser403, Ser456–Ala485, Asn498–Leu527, and Thr535–Cys564.

This Acanthamoeba polyphaga mimivirus (APMV) protein is Putative ankyrin repeat protein R96.